The chain runs to 398 residues: Enolase (398 aa).

Position 154 (Gln-154) interacts with (2R)-2-phosphoglycerate. The Proton donor role is filled by Glu-196. Positions 232, 273, and 300 each coordinate Mg(2+). The (2R)-2-phosphoglycerate site is built by Lys-325, Arg-354, Ser-355, and Lys-376. Residue Lys-325 is the Proton acceptor of the active site.

This sequence belongs to the enolase family. Requires Mg(2+) as cofactor.

It localises to the cytoplasm. Its subcellular location is the secreted. The protein resides in the cell surface. The enzyme catalyses (2R)-2-phosphoglycerate = phosphoenolpyruvate + H2O. It participates in carbohydrate degradation; glycolysis; pyruvate from D-glyceraldehyde 3-phosphate: step 4/5. Catalyzes the reversible conversion of 2-phosphoglycerate (2-PG) into phosphoenolpyruvate (PEP). It is essential for the degradation of carbohydrates via glycolysis. This is Enolase from Natronomonas pharaonis (strain ATCC 35678 / DSM 2160 / CIP 103997 / JCM 8858 / NBRC 14720 / NCIMB 2260 / Gabara) (Halobacterium pharaonis).